The chain runs to 463 residues: L-seryl-tRNA(Sec) selenium transferase (463 aa).

An N6-(pyridoxal phosphate)lysine modification is found at K295.

This sequence belongs to the SelA family. Homodecamer; pentamer of dimers. Binds only one seryl-tRNA(Sec) per dimer. Requires pyridoxal 5'-phosphate as cofactor.

It is found in the cytoplasm. The catalysed reaction is L-seryl-tRNA(Sec) + selenophosphate + H(+) = L-selenocysteinyl-tRNA(Sec) + phosphate. It functions in the pathway aminoacyl-tRNA biosynthesis; selenocysteinyl-tRNA(Sec) biosynthesis; selenocysteinyl-tRNA(Sec) from L-seryl-tRNA(Sec) (bacterial route): step 1/1. In terms of biological role, converts seryl-tRNA(Sec) to selenocysteinyl-tRNA(Sec) required for selenoprotein biosynthesis. This Salmonella arizonae (strain ATCC BAA-731 / CDC346-86 / RSK2980) protein is L-seryl-tRNA(Sec) selenium transferase.